Consider the following 162-residue polypeptide: Transcription antitermination protein NusB (162 aa).

The protein belongs to the NusB family.

Its function is as follows. Involved in transcription antitermination. Required for transcription of ribosomal RNA (rRNA) genes. Binds specifically to the boxA antiterminator sequence of the ribosomal RNA (rrn) operons. This Mycobacterium sp. (strain JLS) protein is Transcription antitermination protein NusB.